We begin with the raw amino-acid sequence, 96 residues long: Co-chaperonin GroES (96 aa).

This sequence belongs to the GroES chaperonin family. In terms of assembly, heptamer of 7 subunits arranged in a ring. Interacts with the chaperonin GroEL.

Its subcellular location is the cytoplasm. Together with the chaperonin GroEL, plays an essential role in assisting protein folding. The GroEL-GroES system forms a nano-cage that allows encapsulation of the non-native substrate proteins and provides a physical environment optimized to promote and accelerate protein folding. GroES binds to the apical surface of the GroEL ring, thereby capping the opening of the GroEL channel. In Wolbachia sp. subsp. Drosophila simulans (strain wRi), this protein is Co-chaperonin GroES.